The chain runs to 1015 residues: DNA polymerase catalytic subunit (1015 aa).

The protein belongs to the DNA polymerase type-B family. In terms of assembly, forms a complex with the major DNA-binding protein BALF2, the DNA polymerase processivity factor BMRF1, and the alkaline exonuclease BGLF5. Interacts with the putative helicase-primase complex composed of BBLF4, BSLF1 and BBLF2/3 proteins; these interactions may coordinate leading and lagging strand DNA synthesis at the replication fork.

It localises to the host nucleus. It carries out the reaction DNA(n) + a 2'-deoxyribonucleoside 5'-triphosphate = DNA(n+1) + diphosphate. Replicates viral genomic DNA in the late phase of lytic infection, producing long concatemeric DNA. The replication complex is composed of six viral proteins: the DNA polymerase, processivity factor, primase, primase-associated factor, helicase, and ssDNA-binding protein. The sequence is that of DNA polymerase catalytic subunit from Homo sapiens (Human).